Here is a 669-residue protein sequence, read N- to C-terminus: Phosphatidylinositol-3-phosphate phosphatase MTMR1 (669 aa).

The residue at position 1 (Met1) is an N-acetylmethionine. Low complexity predominate over residues 1–17 (MDRPVAAAAAASAASCE). A disordered region spans residues 1–55 (MDRPVAAAAAASAASCEGAGGPGPGPGASWRPSRVAGGASASSRHPSIETLDSPT). Phosphoserine occurs at positions 47 and 53. One can recognise a GRAM domain in the interval 94 to 165 (NKLAQMEEAP…GVISRVEKIG (72 aa)). The 376-residue stretch at 230–605 (GWKVYDPVSE…SHLELWVNYY (376 aa)) folds into the Myotubularin phosphatase domain. A 1,2-diacyl-sn-glycero-3-phospho-(1D-myo-inositol-3-phosphate) is bound by residues Asn355, Asn380, and Ile381. The active-site Phosphocysteine intermediate is the Cys442. Ser443, Asp444, Gly445, Trp446, Asp447, Arg448, and Arg488 together coordinate a 1,2-diacyl-sn-glycero-3-phospho-(1D-myo-inositol-3-phosphate). Ser443 lines the phosphate pocket. Gly445, Trp446, Asp447, and Arg448 together coordinate phosphate. The tract at residues 612–669 (MRPQMPIHQNLKELLAIKAELQKRVEDLQREMATRTISSSSERGSSPTHSATPVHTSV) is required for dimerization. Positions 644–669 (ATRTISSSSERGSSPTHSATPVHTSV) are disordered. Positions 649–661 (SSSSERGSSPTHS) are enriched in low complexity.

The protein belongs to the protein-tyrosine phosphatase family. Non-receptor class myotubularin subfamily. Homodimer. In terms of tissue distribution, widely expressed. Detected in skeletal muscle, heart, lung, liver and brain.

The protein localises to the cell membrane. The protein resides in the cytoplasm. The catalysed reaction is a 1,2-diacyl-sn-glycero-3-phospho-(1D-myo-inositol-3-phosphate) + H2O = a 1,2-diacyl-sn-glycero-3-phospho-(1D-myo-inositol) + phosphate. The enzyme catalyses 1,2-dioctanoyl-sn-glycero-3-phospho-(1-D-myo-inositol-3-phosphate) + H2O = 1,2-dioctanoyl-sn-glycero-3-phospho-(1D-myo-inositol) + phosphate. It carries out the reaction a 1,2-diacyl-sn-glycero-3-phospho-(1D-myo-inositol-3,5-bisphosphate) + H2O = a 1,2-diacyl-sn-glycero-3-phospho-(1D-myo-inositol-5-phosphate) + phosphate. Lipid phosphatase that specifically dephosphorylates the D-3 position of phosphatidylinositol 3-phosphate, generating phosphatidylinositol. Could also dephosphorylate phosphatidylinositol 3,5-bisphosphate to produce phosphatidylinositol 5-phosphate. The polypeptide is Phosphatidylinositol-3-phosphate phosphatase MTMR1 (Mus musculus (Mouse)).